Here is a 473-residue protein sequence, read N- to C-terminus: Fumarate hydratase class II 2 (473 aa).

A disordered region spans residues methionine 1–serine 28. Substrate is bound by residues serine 108–threonine 110, histidine 139–aspartate 142, serine 149–asparagine 151, and threonine 197. Residue histidine 198 is the Proton donor/acceptor of the active site. The active site involves serine 328. Substrate-binding positions include serine 329 and lysine 334 to asparagine 336.

This sequence belongs to the class-II fumarase/aspartase family. Fumarase subfamily. Homotetramer.

The protein resides in the cytoplasm. It carries out the reaction (S)-malate = fumarate + H2O. It participates in carbohydrate metabolism; tricarboxylic acid cycle; (S)-malate from fumarate: step 1/1. In terms of biological role, involved in the TCA cycle. Catalyzes the stereospecific interconversion of fumarate to L-malate. In Bradyrhizobium diazoefficiens (strain JCM 10833 / BCRC 13528 / IAM 13628 / NBRC 14792 / USDA 110), this protein is Fumarate hydratase class II 2.